The sequence spans 375 residues: MRKVVGSAYTLTSMLKNEGALDEVVELFMEKLGGFADEQAAFDFGEWLEMFSFDGVGTVFFGSPFGFIKDSIDYGGYINAVHTAMPLNSVVAMAPLWLRPVILYGGIAVPRIFKAIMAADGIRKTAVRVTEIAQARSTDSTSRRTDILSRILSIKDERPGSLTINDVHVEMWGAVIAGSDSTSGALRAIFYYLMKTPDTMTRLVKEIDAAFANGSLTHPIRYSQAIKLAYLDAVIQESLRVFPPFAVPMPRYAPAGGLEISGHYLKSGTKIGMNAMVVQFNKEVFGEDAHKFRPERWLESKDRYRAMNKAMLVFGAGTRTCIGKHLSKAEMYKVVPEILRRFTVRMAHDQPWKTRNATFIMQSNVVCRLERRSDE.

Residue C321 coordinates heme.

It belongs to the cytochrome P450 family. It depends on heme as a cofactor.

It functions in the pathway mycotoxin biosynthesis. Its function is as follows. Cytochrome P450 monooxygenase; part of the gene cluster that mediates the biosynthesis of the host-selective toxins (HSTs) ACR-toxins responsible for brown spot of rough lemon disease by the rough lemon pathotype. ACR-toxins cause uncoupling of mitochondrial oxidative-phosphorylation similar to that of classic protonophore. The structure of the major form of ACR-toxin (ACR-toxin I) consists of an alpha-dihydropyrone ring in a 19-carbon polyalcohol, a typical polyketide structure. Minor toxins were characterized as having a pyrone ring with polyalcohol side chains different in length and showing weaker toxicity. The highly reducing polyketide synthase ACRTS2 has all necessary enzymatic domains for multiple cycles of condensation and beta-keto processing. The cytochrome P450 monooxygenase ACRTS1 has also been shown to be essential for ACR-toxin biosynthesis, however its exact role in the pathway has not been elucidated yet. The polypeptide is Cytochrome P450 monooxygenase ACRTS1 (Alternaria alternata (Alternaria rot fungus)).